The primary structure comprises 309 residues: Carbamate kinase (309 aa).

The protein belongs to the carbamate kinase family.

It is found in the cytoplasm. It carries out the reaction hydrogencarbonate + NH4(+) + ATP = carbamoyl phosphate + ADP + H2O + H(+). Its pathway is metabolic intermediate metabolism; carbamoyl phosphate degradation; CO(2) and NH(3) from carbamoyl phosphate: step 1/1. The chain is Carbamate kinase (arcC) from Staphylococcus haemolyticus (strain JCSC1435).